The primary structure comprises 162 residues: HTH-type transcriptional regulator IscR (162 aa).

The HTH rrf2-type domain occupies R2–N131. Positions L28–K51 form a DNA-binding region, H-T-H motif. Positions 92, 98, and 104 each coordinate [2Fe-2S] cluster. The segment at R141 to A162 is disordered.

[2Fe-2S] cluster is required as a cofactor.

Functionally, regulates the transcription of several operons and genes involved in the biogenesis of Fe-S clusters and Fe-S-containing proteins. This chain is HTH-type transcriptional regulator IscR, found in Cronobacter sakazakii (strain ATCC BAA-894) (Enterobacter sakazakii).